A 420-amino-acid chain; its full sequence is Nucleobindin-2 (420 aa).

Positions 1-24 (MRWRIIQVQYCFLLVPCMLTALEA) are cleaved as a signal peptide. Residues 171–223 (RTRHEEFKKYEMMKEHERREYLKTLSEEKRKEEESKFEEMKRKHEDHPKVNHP) mediate DNA binding. The tract at residues 193-225 (KTLSEEKRKEEESKFEEMKRKHEDHPKVNHPGS) is disordered. A binds to necdin region spans residues 213-420 (KHEDHPKVNH…AGELKFEPHT (208 aa)). 2 EF-hand domains span residues 241–276 (PNDF…ELEK) and 293–328 (ERLR…KEFL). Positions 254, 256, 258, 265, 306, 308, 310, and 317 each coordinate Ca(2+). The GBA signature appears at 304-334 (EIDNNKDRLVTLEEFLRATEKKEFLEPDSWE). Ser-332 is subject to Phosphoserine. Residues 365-389 (AEELQKQKEDLQRQHDHLEAQKQEY) show a composition bias toward basic and acidic residues. Residues 365 to 420 (AEELQKQKEDLQRQHDHLEAQKQEYHQAVQHLEQKKLQQGIAPSGPAGELKFEPHT) are disordered.

This sequence belongs to the nucleobindin family. Interacts (via GBA motif) with guanine nucleotide-binding protein G(i) alpha subunit GNAI3. Preferentially interacts with inactive rather than active GNAI3. Interaction with GNAI3 is inhibited when NUCB2 binds calcium, probably due to a conformational change which renders the GBA motif inaccessible. Binds to the postmitotic growth suppressor NDN; coexpression abolishes NUCB2 secretion. Interacts with MC4R. In terms of tissue distribution, found in liver, heart, thymus, muscle, intestine, kidney, lung, spleen and throughout the brain, in cerebral cortex, hippocampus, hypothalamus and medulla oblongata. Nucb2 and necdin levels were higher in postmitotic neurons.

The protein localises to the cytoplasm. It is found in the perikaryon. The protein resides in the endoplasmic reticulum. Its subcellular location is the golgi apparatus. It localises to the nucleus envelope. The protein localises to the membrane. It is found in the secreted. Functionally, calcium-binding protein which may have a role in calcium homeostasis. Acts as a non-receptor guanine nucleotide exchange factor which binds to and activates guanine nucleotide-binding protein (G-protein) alpha subunit GNAI3. Its function is as follows. Anorexigenic peptide, seems to play an important role in hypothalamic pathways regulating food intake and energy homeostasis, acting in a leptin-independent manner. May also exert hypertensive roles and modulate blood pressure through directly acting on peripheral arterial resistance. In intestinal epithelial cells, plays a role in the inhibition of hepatic glucose production via MC4R receptor leading to increased cyclic adenosine monophosphate (cAMP) levels and glucagon-like peptide 1 (GLP-1) secretion. This chain is Nucleobindin-2 (Nucb2), found in Mus musculus (Mouse).